Here is a 218-residue protein sequence, read N- to C-terminus: 7-cyano-7-deazaguanine synthase (218 aa).

9–19 is an ATP binding site; the sequence is YSGGMDSFTVL. Zn(2+) is bound by residues cysteine 185, cysteine 193, cysteine 196, and cysteine 199.

Belongs to the QueC family. It depends on Zn(2+) as a cofactor.

The catalysed reaction is 7-carboxy-7-deazaguanine + NH4(+) + ATP = 7-cyano-7-deazaguanine + ADP + phosphate + H2O + H(+). It functions in the pathway purine metabolism; 7-cyano-7-deazaguanine biosynthesis. Its function is as follows. Catalyzes the ATP-dependent conversion of 7-carboxy-7-deazaguanine (CDG) to 7-cyano-7-deazaguanine (preQ(0)). The polypeptide is 7-cyano-7-deazaguanine synthase (Pseudoalteromonas translucida (strain TAC 125)).